The following is a 242-amino-acid chain: DNA repair protein RecO (242 aa).

It belongs to the RecO family.

Functionally, involved in DNA repair and RecF pathway recombination. The protein is DNA repair protein RecO of Xanthobacter autotrophicus (strain ATCC BAA-1158 / Py2).